Here is a 552-residue protein sequence, read N- to C-terminus: Membrane protein insertase YidC (552 aa).

The next 5 membrane-spanning stretches (helical) occupy residues 7-24 (VLWV…DNWQ), 364-384 (WGWA…PLSA), 434-454 (LPVV…LASV), 473-493 (PFFI…SLNP), and 508-528 (PIAF…YYVV).

The protein belongs to the OXA1/ALB3/YidC family. Type 1 subfamily. As to quaternary structure, interacts with the Sec translocase complex via SecD. Specifically interacts with transmembrane segments of nascent integral membrane proteins during membrane integration.

It is found in the cell inner membrane. Functionally, required for the insertion and/or proper folding and/or complex formation of integral membrane proteins into the membrane. Involved in integration of membrane proteins that insert both dependently and independently of the Sec translocase complex, as well as at least some lipoproteins. Aids folding of multispanning membrane proteins. In Burkholderia cenocepacia (strain ATCC BAA-245 / DSM 16553 / LMG 16656 / NCTC 13227 / J2315 / CF5610) (Burkholderia cepacia (strain J2315)), this protein is Membrane protein insertase YidC.